The following is a 376-amino-acid chain: ATP phosphoribosyltransferase regulatory subunit (376 aa).

This sequence belongs to the class-II aminoacyl-tRNA synthetase family. HisZ subfamily. In terms of assembly, heteromultimer composed of HisG and HisZ subunits.

It localises to the cytoplasm. It participates in amino-acid biosynthesis; L-histidine biosynthesis; L-histidine from 5-phospho-alpha-D-ribose 1-diphosphate: step 1/9. In terms of biological role, required for the first step of histidine biosynthesis. May allow the feedback regulation of ATP phosphoribosyltransferase activity by histidine. The sequence is that of ATP phosphoribosyltransferase regulatory subunit from Brucella canis (strain ATCC 23365 / NCTC 10854 / RM-666).